Reading from the N-terminus, the 56-residue chain is U-limacoditoxin(3)-Dv21 (56 aa).

A signal peptide spans 1-19 (MKKVIMLLLIFALFAYALS). 3 disulfide bridges follow: C26/C41, C33/C46, and C40/C53.

The protein belongs to the limacoditoxin-22 family. As to expression, expressed by the venom secretory cell of the spine. The spine is a cuticular structure containing a single large nucleated venom-secreting cell at its base. It is an independent unit capable of producing, storing and injecting venom. On the back of D.vulnerans caterpillars, spines are grouped together by 50 to 100 to form scoli, of which there are eight in D.vulnerans.

It is found in the secreted. Its function is as follows. Probable toxin. Shows a moderate antiparasitic activity against the major pathogenic nematode of ruminants (H.contortus, IC(50)=22.1 uM). Does not show insecticidal activities. Does not induce increase in intracellular calcium in mouse DRG neurons, suggesting that it does not induce pain. The sequence is that of U-limacoditoxin(3)-Dv21 from Doratifera vulnerans (Mottled cup moth).